The chain runs to 91 residues: Small ribosomal subunit protein bS18 (91 aa).

It belongs to the bacterial ribosomal protein bS18 family. As to quaternary structure, part of the 30S ribosomal subunit. Forms a tight heterodimer with protein bS6.

Functionally, binds as a heterodimer with protein bS6 to the central domain of the 16S rRNA, where it helps stabilize the platform of the 30S subunit. The protein is Small ribosomal subunit protein bS18 of Burkholderia multivorans (strain ATCC 17616 / 249).